Consider the following 188-residue polypeptide: Peptidyl-tRNA hydrolase (188 aa).

Position 14 (Tyr-14) interacts with tRNA. His-19 (proton acceptor) is an active-site residue. TRNA is bound by residues Tyr-64, Asn-66, and Asn-112.

Belongs to the PTH family. Monomer.

It is found in the cytoplasm. The enzyme catalyses an N-acyl-L-alpha-aminoacyl-tRNA + H2O = an N-acyl-L-amino acid + a tRNA + H(+). Its function is as follows. Hydrolyzes ribosome-free peptidyl-tRNAs (with 1 or more amino acids incorporated), which drop off the ribosome during protein synthesis, or as a result of ribosome stalling. Catalyzes the release of premature peptidyl moieties from peptidyl-tRNA molecules trapped in stalled 50S ribosomal subunits, and thus maintains levels of free tRNAs and 50S ribosomes. The sequence is that of Peptidyl-tRNA hydrolase from Bacillus pumilus (strain SAFR-032).